Consider the following 488-residue polypeptide: Ribulose bisphosphate carboxylase large chain (488 aa).

The substrate site is built by Asn127 and Thr177. The active-site Proton acceptor is Lys179. Position 181 (Lys181) interacts with substrate. Mg(2+)-binding residues include Lys205, Asp207, and Glu208. Lys205 carries the post-translational modification N6-carboxylysine. His297 serves as the catalytic Proton acceptor. Positions 298, 330, and 382 each coordinate substrate.

The protein belongs to the RuBisCO large chain family. Type I subfamily. In terms of assembly, heterohexadecamer of 8 large chains and 8 small chains. Mg(2+) is required as a cofactor.

It localises to the plastid. The protein localises to the chloroplast. It catalyses the reaction 2 (2R)-3-phosphoglycerate + 2 H(+) = D-ribulose 1,5-bisphosphate + CO2 + H2O. It carries out the reaction D-ribulose 1,5-bisphosphate + O2 = 2-phosphoglycolate + (2R)-3-phosphoglycerate + 2 H(+). RuBisCO catalyzes two reactions: the carboxylation of D-ribulose 1,5-bisphosphate, the primary event in carbon dioxide fixation, as well as the oxidative fragmentation of the pentose substrate in the photorespiration process. Both reactions occur simultaneously and in competition at the same active site. The sequence is that of Ribulose bisphosphate carboxylase large chain from Pylaiella littoralis (Seaweed).